The following is a 320-amino-acid chain: Cytochrome f (320 aa).

A signal peptide spans 1–35; sequence MQTRNTFSWIREEITRSISVSLMIYIITWASISSA. The heme site is built by Tyr-36, Cys-56, Cys-59, and His-60. Residues 286 to 305 traverse the membrane as a helical segment; sequence VQGLLFFLGSVVLAQIFLVL.

This sequence belongs to the cytochrome f family. As to quaternary structure, the 4 large subunits of the cytochrome b6-f complex are cytochrome b6, subunit IV (17 kDa polypeptide, petD), cytochrome f and the Rieske protein, while the 4 small subunits are PetG, PetL, PetM and PetN. The complex functions as a dimer. Requires heme as cofactor. Purified from leaves as a water-soluble monomeric protein with a mass of 28.16 kDa, cleavage occurs after Gln-287 and separates the heme-binding from the membrane.

The protein localises to the plastid. Its subcellular location is the chloroplast thylakoid membrane. Functionally, component of the cytochrome b6-f complex, which mediates electron transfer between photosystem II (PSII) and photosystem I (PSI), cyclic electron flow around PSI, and state transitions. This Brassica rapa subsp. rapa (Turnip) protein is Cytochrome f (petA).